Here is a 494-residue protein sequence, read N- to C-terminus: Costunolide synthase (494 aa).

The chain crosses the membrane as a helical span at residues 3–23 (PLTIVSLVVASLFLFAFWALS). C432 provides a ligand contact to heme.

This sequence belongs to the cytochrome P450 family. Heme is required as a cofactor.

The protein localises to the membrane. The catalysed reaction is germacra-1(10),4,11(13)-trien-12-oate + reduced [NADPH--hemoprotein reductase] + O2 = (+)-costunolide + oxidized [NADPH--hemoprotein reductase] + 2 H2O. Hydroxylates germacrene A acid to 6-alpha-hydroxy-germacrne A acid, a precursor of sesquiterpene lactones that spontaneously undergoes a lactonization which yields costunolide. Costunolide can then spontaneously conjugate to glutathione or cysteine. This Cichorium intybus (Chicory) protein is Costunolide synthase (CYP71BL3).